The primary structure comprises 522 residues: Lysine--tRNA ligase (522 aa).

The 'HIGH' region motif lies at 44–52; that stretch reads PSGLPHIGT. Residues 290 to 294 carry the 'KMSKS' region motif; that stretch reads KISKS. K293 serves as a coordination point for ATP.

The protein belongs to the class-I aminoacyl-tRNA synthetase family.

Its subcellular location is the cytoplasm. The catalysed reaction is tRNA(Lys) + L-lysine + ATP = L-lysyl-tRNA(Lys) + AMP + diphosphate. In Rickettsia bellii (strain RML369-C), this protein is Lysine--tRNA ligase.